We begin with the raw amino-acid sequence, 1845 residues long: MSTNSTPRKQKLSNSKSLQNSPISPTVKKTNSFPLGNNIPTNINRSKKDKNNNSNNNINNNNSNGIGSNTIINSTPIATTPVPPLPFIHSSSSSSSSPSPSSSSSSPFPKAKKSPSLSINQQQQQQPQQPQQSPQSQQSPQSQQSQQSQQQQPQQPQEQQEPLPNLSFLRNQEPDKNVLPTSRKRPPSVMPSTPNQSSNSSSLNSSLNFSSSNSSPSPTSTQSNNSRFETRSQNDQYENNNNNNNNNNNNNNNNNNNNNNNNNIECIVIDDDDDDDDDEGNSIKSTHTSTQSTPIRDRRQRDNKWTINPLPQFQREIIDVDTPSPPNESLSIVSQTTTNTITDTTSIQTPTLIRQSSSLLSSSSSLSPSTTSTPLTQNNINLQNAQVIATMTAPMEIELPTIVQLEPLFSSEFTTSTQNLFIQTPPFTSTLTLPTTTAQTSQTLFTIQTSHDINNNNNNNNNNKNKNKNKKEIEKEKEKLREALKQKLKEYENENEKEREKERKREREIEIERERKERERKEREKERKKEKEREREREERERKEIERKEREREEREERERKEIERKETERKEIERKEIERKEIERKERERKERKEREEREEREREERERKEREEREKEIEMEREKKKEKEKEKEKEKEKEKEKEKEKEKEKEKEKEKEKKRKENEVENEIEKERREKNDSYMVLNYHHSIDDHHSESESESDSDQDSIYSISTQELSSVISDNDFCDSDNEKVANNNRTVGETFLNDSRNNNNNNNNNKNNNNKKIENDKNQLIERERLISAFNDKAFLYALDTIREVLGGIDFKLKVSKEQIIEISTNAKKPLNILSEPEQQQQQQQQQQQQQHQQQQQQQQQQQQQQQQQTTKTTTTTNNTTTTTAETEKPKEVFLLKKPIKIPYGRDCKKRLIRRFHGTSRNPLFHKNLESTLKLLKRAKFDWASIEFDTKSYLMNCNCKTVCHKSERMKDNPTNKLQNNNRNNNNNNNNIINNNNNNNNKNNNNKNNNNKNNNRNNNSIAKKIGTNNNNNNTTIIKNNNNNNNNNNNNNNNNNNIIKNNNNNNKNNNNNNNTIVKKIETIKKDINKKPTKTTTTTSSSSSSTSSSNSLTVIKKPVKKINGSQRICLFEDDFDVGIGVPVTTGTSETTTTRASSIRRKMNISNIFDDFTKKPRQNKYNEIEMPDLFASKECNYTLEQQAPFIRAQKLLLTQQHENNLYNGKRFMKYDEWLDLYHGEMRSSIQNPKVLKHYISFSQEVYGEAEPTLLRHWIHLGLIKPTDVFCDIGCGIGNVLFQLAAQVGCRVIGVEIRKDLYDISQSMLEIYKKRSLELGLHPSTQQIKIYNCDVKGSLEFDFSEPNVFFMHNTCFGPELEISIMELFKKYSKPGTKVITMKTLCPRFKPSDKKTKPWGIFKYPYESYEMEEGSLSWRSATNCSFYSFTIDDKDSDIVTDQTHLNRVILSTPKKKHSKLQLFSSSSLPSSPPSSSSSSSPPNIATNTTTTTTTTTTTSPSSISLPSPYLSPSKKTPNSNKRDRSDIDNSNSDDGDENNNNININNNNNNSNNKPIKLKLSMDHSIDNQSNSESSDTDVEYMPWSKRNNRKKRKSLSYSLDSYLSSRISPSLSLSTSSSSSSSLDSSPYSSPPSSSSSDNENDDDNGDDEDDSSSSNDTKLKEKLLLMKNNEKIGGAPPLTRRNANSDTNKLVQGCYQSLSSYALPKEESQIHKLQLQAKLLEHKNSLVLKHQKSIHDQQKRLSRKQKKLAKKNKKKEQQLQAQAKTINYNNNNNNNNQNDNQVNHNNLNENEINTDLINGYNNNNNNNIINNDNDNDNDNDKDDDKDSNNKDYNNINDNNK.

Over residues 1–44 (MSTNSTPRKQKLSNSKSLQNSPISPTVKKTNSFPLGNNIPTNIN) the composition is skewed to polar residues. Disordered stretches follow at residues 1–67 (MSTN…NGIG), 83–306 (PPLP…NKWT), 450–470 (SHDI…NKNK), 486–571 (QKLK…TERK), 585–681 (RKER…NDSY), 741–767 (GETF…KKIE), 862–881 (QTTK…AETE), and 963–1102 (KDNP…SNSL). Composition is skewed to low complexity over residues 52–67 (NNSN…NGIG), 90–162 (SSSS…QQEP), 191–226 (PSTP…SNNS), and 239–263 (NNNN…NNNN). Residues 268–280 (VIDDDDDDDDDEG) are compositionally biased toward acidic residues. Residues 282–294 (SIKSTHTSTQSTP) show a composition bias toward polar residues. Basic and acidic residues predominate over residues 295–304 (IRDRRQRDNK). A compositionally biased stretch (low complexity) spans 453–464 (INNNNNNNNNNK). Residues 585 to 679 (RKERERKERK…IEKERREKND (95 aa)) are compositionally biased toward basic and acidic residues. Residues 625–639 (KKKEKEKEKEKEKEK) are required for interaction with nucleosomes and DNA. 4 stretches are compositionally biased toward low complexity: residues 750 to 763 (NNNN…NNNN), 862 to 877 (QTTK…TTTT), 972 to 1011 (NNNR…RNNN), and 1020 to 1067 (NNNN…NNTI). Residues 1069-1080 (KKIETIKKDINK) show a composition bias toward basic and acidic residues. The span at 1084-1102 (KTTTTTSSSSSSTSSSNSL) shows a compositional bias: low complexity. The DOT1 domain maps to 1125–1446 (FDVGIGVPVT…KDSDIVTDQT (322 aa)). Residues 1251 to 1254 (YGEA), 1274 to 1283 (FCDIGCGIGN), and Glu1300 each bind S-adenosyl-L-methionine. Disordered regions lie at residues 1463 to 1559 (LQLF…NKPI), 1610 to 1661 (RISP…SSND), 1735 to 1762 (HQKS…KKEQ), 1772 to 1791 (NYNN…NHNN), and 1799 to 1845 (TDLI…DNNK). Composition is skewed to low complexity over residues 1467 to 1522 (SSSS…TPNS), 1541 to 1556 (NNNN…NSNN), and 1610 to 1642 (RISP…SSSD). Residues 1643-1656 (NENDDDNGDDEDDS) are compositionally biased toward acidic residues. Basic residues predominate over residues 1745–1759 (RLSRKQKKLAKKNKK). 2 stretches are compositionally biased toward low complexity: residues 1799–1817 (TDLI…INND) and 1835–1845 (KDYNNINDNNK).

It belongs to the class I-like SAM-binding methyltransferase superfamily. DOT1 family.

It localises to the nucleus. It catalyses the reaction L-lysyl(79)-[histone H3] + 3 S-adenosyl-L-methionine = N(6),N(6),N(6)-trimethyl-L-lysyl(79)-[histone H3] + 3 S-adenosyl-L-homocysteine + 3 H(+). Functionally, histone methyltransferase that specifically methylates histone H3 to form H3K79me. This methylation is required for telomere silencing, correct growth and development, and for resistance to DNA damage induced by UV LIGHT. The polypeptide is Histone-lysine N-methyltransferase, H3 lysine-79 specific (Dictyostelium discoideum (Social amoeba)).